Reading from the N-terminus, the 462-residue chain is Zinc transporter 6-B (462 aa).

At 1–33 (MGTIYLFRKTQRSLLGKLTQEFRLVTADRRSWK) the chain is on the cytoplasmic side. The chain crosses the membrane as a helical span at residues 34–54 (ILLFGAINVVCTGFLLTWCSS). Topologically, residues 55 to 64 (TNSMALTAYT) are extracellular. A helical transmembrane segment spans residues 65 to 85 (YLTIFDLFSLITSLISYWVMM). At 86–98 (KKPSPTYSFGFER) the chain is on the cytoplasmic side. The chain crosses the membrane as a helical span at residues 99–119 (LEVLAVFASTVLAQLGALFIL). Residues 120–134 (KESAERFLEQPEIHT) are Extracellular-facing. A helical transmembrane segment spans residues 135–155 (GRLLVGTFVALFFNLFTMLSI). Over 156 to 200 (RNKPFAYVSEAASTSWLQEHVADLSRSLCGVIPGLSSIFLPRMNP) the chain is Cytoplasmic. Residues 201–221 (FVLIDIAGALALCITYMLIEI) traverse the membrane as a helical segment. Topologically, residues 222–223 (NN) are extracellular. The helical transmembrane segment at 224–244 (YFAVDTASAIAIAVMTFGTMY) threads the bilayer. At 245-462 (PMSVYSGKVL…TPGQFTQFRQ (218 aa)) the chain is on the cytoplasmic side.

This sequence belongs to the cation diffusion facilitator (CDF) transporter (TC 2.A.4) family. SLC30A subfamily. In terms of assembly, heterodimer with SLC30A5; form a functional zinc ion transmembrane transporter.

The protein localises to the golgi apparatus. Its subcellular location is the trans-Golgi network membrane. In terms of biological role, has probably no intrinsic transporter activity but together with SLC30A5 forms a functional zinc ion:proton antiporter heterodimer, mediating zinc entry into the lumen of organelles along the secretory pathway. As part of that zinc ion:proton antiporter, contributes to zinc ion homeostasis within the early secretory pathway and regulates the activation and folding of enzymes like alkaline phosphatases and enzymes involved in phosphatidylinositol glycan anchor biosynthesis. The chain is Zinc transporter 6-B (slc30a6-b) from Xenopus laevis (African clawed frog).